A 199-amino-acid chain; its full sequence is Pre T-cell antigen receptor alpha (199 aa).

Residues 1–16 (MARTWLLLLLGVRCQA) form the signal peptide. Topologically, residues 17 to 146 (LPSGIAGTPF…PEPLGGTQRQ (130 aa)) are extracellular. Cys-47 and Cys-107 are joined by a disulfide. N-linked (GlcNAc...) asparagine glycans are attached at residues Asn-67 and Asn-117. Residues 147 to 167 (VLWLSLLRLLLFKLLLLDVLL) form a helical membrane-spanning segment. The Cytoplasmic segment spans residues 168–199 (TCSHLRLHVLAGQHLQPPPSRKSLPPTHRIWT).

As to quaternary structure, heterodimer with TCRB; disulfide linked. This heterodimer assembles with CD3 proteins into a signaling-competent pre-T-cell receptor complex. Interacts with RHBDD1. As to expression, isoform 1 is expressed at higher levels than isoform 2 in the thymus while only isoform 2 is expressed in polyclonal beta-only cells. Isoform 1 shows a predominant expression in immature thymocytes.

It localises to the membrane. The protein localises to the cell membrane. In terms of biological role, component of the pre-T-cell receptor complex (composed of PTCRA, TCRB and the CD3 complex) that plays a crucial role in early T-cell development, particularly alpha-beta T cell differentiation. Isoform 1 acts to retain most TCRB intracellularly, while isoform 2 permits higher levels of cell surface TCRB expression and facilitates signaling from the CD3-TCRB complex. The polypeptide is Pre T-cell antigen receptor alpha (Mus musculus (Mouse)).